The primary structure comprises 261 residues: Short-chain dehydrogenase/reductase ARMGADRAFT_1018421 (261 aa).

NADP(+) is bound by residues Ile-21, Asp-68, Asn-95, Lys-128, Tyr-161, Lys-165, Val-194, and Thr-196. Residue Tyr-161 is the Proton acceptor of the active site. The active-site Lowers pKa of active site Tyr is Lys-165.

Belongs to the short-chain dehydrogenases/reductases (SDR) family.

The protein operates within secondary metabolite biosynthesis. In terms of biological role, short-chain dehydrogenase/reductase, part of the gene cluster that mediates the biosynthesis of melleolides, a range of antifungal and phytotoxic polyketide derivatives composed of an orsellinic acid (OA) moiety esterified to various sesquiterpene alcohols. The first step in melleolides biosynthesis is performed by the delta(6)-protoilludene synthase PRO1 which catalyzes the cyclization of farnesyl diphosphate to protoilludene. The orsellinic acid synthase armB produces OA by condensing acetyl-CoA with 3 malonyl-CoA units in a three-round chain elongation reaction folowed by a C2-C7 ring closure. ArmB further catalyzes the trans-esterification of OA to the various sesquiterpene alcohols resulting from the hydroxylation of protoilludene. The melleolides cluster also includes 5 cytochrome P450 monooxygenases, 4 NAD(+)-dependent oxidoreductases, one flavin-dependent oxidoreductase, and one O-methyltransferase. The cytochrome P450 monooxygenases may be involved in protoilludene hydroxylation to elaborate melleolides with multiple alcohol groups, such as melleolide D, which carries alcohol functionalities at C-4, C-5, C-10, and C-13. The role of the NAD(+)-dependent enzymes remains unknown. Numerous melleolides, including arnamial, show 5'-O-methylation of the aromatic moiety which may be catalyzed by the methyltransferase encoded in the cluster. The flavin-dependent oxidoreductase might represent the dehydrogenase yielding the aldehyde in position 1 of arnamial and other melleolides. Finally, several halogenase localized outside of the cluster, are able to catalyze the transfer of a single chlorine atom to the melleolide backbone, resulting in a 6'-chloromelleolide product. This chain is Short-chain dehydrogenase/reductase ARMGADRAFT_1018421, found in Armillaria gallica (Bulbous honey fungus).